We begin with the raw amino-acid sequence, 78 residues long: MAKPPVRKPKKKVCAFCKDKVTYVDYKDTNMLRKFISDRGKIRARRVTGNCTQHQRDVATAVKNSREMALLPYTSTAR.

It belongs to the bacterial ribosomal protein bS18 family. In terms of assembly, part of the 30S ribosomal subunit. Forms a tight heterodimer with protein bS6.

Binds as a heterodimer with protein bS6 to the central domain of the 16S rRNA, where it helps stabilize the platform of the 30S subunit. The chain is Small ribosomal subunit protein bS18A from Streptomyces avermitilis (strain ATCC 31267 / DSM 46492 / JCM 5070 / NBRC 14893 / NCIMB 12804 / NRRL 8165 / MA-4680).